Reading from the N-terminus, the 632-residue chain is Golgin subfamily A member 8M (632 aa).

The segment at 1–77 (MAEETQHNKL…SSATLKDLES (77 aa)) is disordered. Residues 38 to 50 (TNGSIPQTATSGG) show a composition bias toward polar residues. 2 coiled-coil regions span residues 86-154 (LDSR…HMKR) and 209-421 (KLEQ…SLMA). The span at 352-362 (KQEERIQEQHK) shows a compositional bias: basic and acidic residues. Disordered regions lie at residues 352 to 384 (KQEE…NKST), 422 to 456 (LPGE…REAM), and 505 to 524 (DAAL…DEGE). A compositionally biased stretch (gly residues) spans 508–520 (LGGGHHQAGAQGG).

Belongs to the GOLGA8 family.

The chain is Golgin subfamily A member 8M from Homo sapiens (Human).